A 125-amino-acid chain; its full sequence is Ribonuclease P protein component (125 aa).

Belongs to the RnpA family. As to quaternary structure, consists of a catalytic RNA component (M1 or rnpB) and a protein subunit.

It carries out the reaction Endonucleolytic cleavage of RNA, removing 5'-extranucleotides from tRNA precursor.. In terms of biological role, RNaseP catalyzes the removal of the 5'-leader sequence from pre-tRNA to produce the mature 5'-terminus. It can also cleave other RNA substrates such as 4.5S RNA. The protein component plays an auxiliary but essential role in vivo by binding to the 5'-leader sequence and broadening the substrate specificity of the ribozyme. This chain is Ribonuclease P protein component, found in Clostridium beijerinckii (strain ATCC 51743 / NCIMB 8052) (Clostridium acetobutylicum).